A 160-amino-acid polypeptide reads, in one-letter code: uncharacterized protein (160 aa).

The protein resides in the cytoplasm. The protein localises to the nucleus. This is an uncharacterized protein from Schizosaccharomyces pombe (strain 972 / ATCC 24843) (Fission yeast).